The sequence spans 320 residues: 1,5-anhydro-D-fructose reductase (320 aa).

Position 35 (Asp35) interacts with NADP(+). Catalysis depends on Tyr40, which acts as the Proton donor. His102 is a binding site for substrate. Residues Gln194 and 265–277 (IPGS…IKEN) each bind NADP(+).

The protein belongs to the aldo/keto reductase family. In terms of assembly, monomer. Specifically expressed in testis. Expressed in testicular germ cells and testis interstitial cells.

It localises to the cytoplasm. The enzyme catalyses 1,5-anhydro-D-glucitol + NADP(+) = 1,5-anhydro-D-fructose + NADPH + H(+). Its activity is regulated as follows. Inhibited by p-chloromercuribenzoic acid and alkyliodines. Its function is as follows. Catalyzes the NADPH-dependent reduction of 1,5-anhydro-D-fructose (AF) to 1,5-anhydro-D-glucitol. Has low NADPH-dependent reductase activity towards 9,10-phenanthrenequinone (in vitro). This chain is 1,5-anhydro-D-fructose reductase (AKR1E2), found in Homo sapiens (Human).